The chain runs to 573 residues: Urease subunit alpha 1 (573 aa).

The Urease domain occupies 136 to 573 (GGIDTHVHFI…LPLAQRYFLF (438 aa)). H141, H143, and K224 together coordinate Ni(2+). Residue K224 is modified to N6-carboxylysine. H226 is a substrate binding site. Ni(2+) is bound by residues H253 and H279. H327 acts as the Proton donor in catalysis. D367 is a Ni(2+) binding site.

Belongs to the metallo-dependent hydrolases superfamily. Urease alpha subunit family. In terms of assembly, may form a heterohexamer of 3 UreC (alpha) and 3 UreAB (gamma/beta) subunits. May also form a heterotrimer of UreA (gamma), UreB (beta) and UreC (alpha) subunits. Three heterotrimers associate to form the active enzyme. Ni cation serves as cofactor. In terms of processing, carboxylation allows a single lysine to coordinate two nickel ions.

The protein localises to the cytoplasm. It carries out the reaction urea + 2 H2O + H(+) = hydrogencarbonate + 2 NH4(+). It functions in the pathway nitrogen metabolism; urea degradation; CO(2) and NH(3) from urea (urease route): step 1/1. The polypeptide is Urease subunit alpha 1 (Streptomyces coelicolor (strain ATCC BAA-471 / A3(2) / M145)).